The primary structure comprises 308 residues: Alternaria stem canker resistance protein 1 (308 aa).

6 consecutive transmembrane segments (helical) span residues 21-41 (YQDL…RFIL), 82-102 (FVYF…EPWF), 128-148 (LLYM…LYWE), 165-185 (VSLI…VVLA), 213-233 (FSLF…FWII), and 254-274 (IILY…HLFW). Residues 73 to 287 (NKFKESAWKF…ILRMVKNQIL (215 aa)) form the TLC domain.

It localises to the endoplasmic reticulum membrane. Its function is as follows. Mediates resistance to sphinganine-analog mycotoxins (SAMs) by restoring the sphingolipid biosynthesis. Could salvage the transport of GPI-anchored proteins from the endoplasmic reticulum to the Golgi apparatus in ceramides-depleted cells after SAM exposure. This Solanum lycopersicum (Tomato) protein is Alternaria stem canker resistance protein 1.